We begin with the raw amino-acid sequence, 329 residues long: Pantothenate kinase (329 aa).

Residues 1–22 are disordered; it reads MPAQGPSHGELPPADAGRESSP. Residue 107–114 coordinates ATP; that stretch reads GSVAVGKS.

Belongs to the prokaryotic pantothenate kinase family.

It localises to the cytoplasm. The enzyme catalyses (R)-pantothenate + ATP = (R)-4'-phosphopantothenate + ADP + H(+). It participates in cofactor biosynthesis; coenzyme A biosynthesis; CoA from (R)-pantothenate: step 1/5. The chain is Pantothenate kinase from Nocardioides sp. (strain ATCC BAA-499 / JS614).